The primary structure comprises 1104 residues: MKRSIVTGGGNNDKKFKAQPPPKNNYRGGGDDEEDDEFEEDDDEDEGDEFGEEEDEDDIDVENIIASDSMDIDIQDDGSQQLFLWSRKPVQDLVPHKKPLIFQQLEVDYTEIKEPVPGMPGPKVGPLPAIRLFGVTKEGNSVLCKVHGFLPYFFISCPPGFTEADCKSLKHDLNESMKMSSNQSNEKDIENIVVSIDIEKKKSIMGYNPNPLSDFIRITLILPKFVTRCREIFESGRHHFTIPGQPFRQYQTYESNILFALRFLIDKGITGCSWIELPANTYKLSETPVSTCQIEVDTSLETIISLSDDDSPAPYRILSFDIECAGRKGVFPEPEKDPVIQISNIVKNNGDAEPFIKNIFTLKGCSSIVGAHVIPHKREEDLLREWRKFVIKVDPDVIIGYNIVNFDIPYLISRARQLKIPEFALLGRIKTTISKIKSTRFSSSNLGTRESKEISMPGRTQFDLMQAIQRDHKLTSYSLNNVSAHFLKEQKEDVHFSIISDLQNGTDDDRRRLAVYCIKDAVLPMRLLDKLMILINYTEMARVTGVPLSYLLGRGEGIKVLSQLYRKAMVENFLIPTYKVTGKGEKFQGAIVIEPTPGFYDTPIATLDFTSLYPSIMMAHNLCYSTLLSAEEAKKLPPEIYTTTPFGDHFIKSDTKKGLLPRILEELLSARKKAKDELKNEKDPFKRAVLDGRQLALKISANSVYGFTGARVGKLPCLEISRSVTSFGREMLDKTKKIVEERYTIANGYKHDAVIIYGDTDSVMVKFGVKTVAEAMEMGRDAAKFVTTTFIRPINLDFEKVYYPYLLMAKKKYAGLYWTKPDIHDRMDVKGLEMVRRDTCLLVRNVVSTILKKILIEKDLKSAEEYTKSVISDLLQNRLDLSMLVITKALSKTQYKGKVIHNELARKMRARDPATAPNLGDRVPYVVIQGSKGAPIYEKAEDPLYALEHNILLDCQYYLDKQLKAPLIRIFKPIMSNPDLIFHGEHTRTIAQSTLSDNNKGFFGTLKKKKVCMNCPKELTDTESTTCINCQHKEASLYQTSLEKVTSLETKFSEAWTQCQRCSGSLHQPVLCSNRDCPIFYMRTKVQLDLIEAKKTLNRFNVEW.

Residues 1–60 are disordered; it reads MKRSIVTGGGNNDKKFKAQPPPKNNYRGGGDDEEDDEFEEDDDEDEGDEFGEEEDEDDID. Residues 31–60 show a composition bias toward acidic residues; it reads DDEEDDEFEEDDDEDEGDEFGEEEDEDDID. Residues Cys1012, Cys1015, Cys1027, and Cys1030 each contribute to the Zn(2+) site. The segment at 1012–1030 adopts a CysA-type zinc-finger fold; the sequence is CMNCPKELTDTESTTCINC. [4Fe-4S] cluster contacts are provided by Cys1059, Cys1062, Cys1072, and Cys1077. Positions 1059 to 1077 match the CysB motif motif; it reads CQRCSGSLHQPVLCSNRDC.

It belongs to the DNA polymerase type-B family. As to quaternary structure, heterotetramer composed of subunits of 125 kDa, 50 kDa, 66 kDa and 12 kDa. The 125 kDa subunit contains the polymerase active site and most likely the active site for the 3'-5' exonuclease activity. [4Fe-4S] cluster serves as cofactor.

Its subcellular location is the nucleus. The catalysed reaction is DNA(n) + a 2'-deoxyribonucleoside 5'-triphosphate = DNA(n+1) + diphosphate. In terms of biological role, possesses two enzymatic activities: DNA synthesis (polymerase) and an exonucleolytic activity that degrades single stranded DNA in the 3'- to 5'-direction. This chain is DNA polymerase delta catalytic subunit (pold1), found in Dictyostelium discoideum (Social amoeba).